The primary structure comprises 281 residues: Ribosomal RNA small subunit methyltransferase J (281 aa).

S-adenosyl-L-methionine-binding positions include 129–130 (RD), 145–146 (ER), and Asp-199.

This sequence belongs to the methyltransferase superfamily. RsmJ family.

It localises to the cytoplasm. The catalysed reaction is guanosine(1516) in 16S rRNA + S-adenosyl-L-methionine = N(2)-methylguanosine(1516) in 16S rRNA + S-adenosyl-L-homocysteine + H(+). In terms of biological role, specifically methylates the guanosine in position 1516 of 16S rRNA. The protein is Ribosomal RNA small subunit methyltransferase J of Laribacter hongkongensis (strain HLHK9).